Reading from the N-terminus, the 143-residue chain is Peptide methionine sulfoxide reductase MsrB (143 aa).

Residues 16–139 (DAELRRRLTP…NSAALNFESR (124 aa)) form the MsrB domain. Positions 55, 58, 104, and 107 each coordinate Zn(2+). The active-site Nucleophile is Cys128.

It belongs to the MsrB Met sulfoxide reductase family. The cofactor is Zn(2+).

The enzyme catalyses L-methionyl-[protein] + [thioredoxin]-disulfide + H2O = L-methionyl-(R)-S-oxide-[protein] + [thioredoxin]-dithiol. This chain is Peptide methionine sulfoxide reductase MsrB, found in Burkholderia cenocepacia (strain HI2424).